A 34-amino-acid polypeptide reads, in one-letter code: Calcitonin-like peptide 2 (34 aa).

Cysteines 2 and 7 form a disulfide. Phe-34 is modified (phenylalanine amide).

In Odorrana schmackeri (Schmacker's frog), this protein is Calcitonin-like peptide 2.